Reading from the N-terminus, the 424-residue chain is UPF0761 membrane protein Smal_0716 (424 aa).

6 helical membrane passes run 48–68 (VFAL…FPVF), 101–121 (SAGQ…LITL), 144–164 (FLVY…SLAV), 181–201 (WLAD…CITL), 216–236 (AVPG…GIGA), and 251–271 (VAFV…VLLG).

Belongs to the UPF0761 family.

The protein localises to the cell inner membrane. This is UPF0761 membrane protein Smal_0716 from Stenotrophomonas maltophilia (strain R551-3).